We begin with the raw amino-acid sequence, 437 residues long: 5-hydroxytryptamine receptor 3B (437 aa).

A signal peptide spans 1–21 (MILLWSCLLVAVVGILGTATP). The Extracellular segment spans residues 22 to 238 (QPGNSSLHRL…VVIRRCPLAY (217 aa)). Asn-25, Asn-92, and Asn-134 each carry an N-linked (GlcNAc...) asparagine glycan. Cys-151 and Cys-165 are disulfide-bonded. The helical transmembrane segment at 239–259 (VVSLLIPSIFLMLVDLGSFYL) threads the bilayer. The Cytoplasmic portion of the chain corresponds to 260–264 (PPNCR). Residues 265–282 (ARIVFKTNVLVGYTVFRV) form a helical membrane-spanning segment. N-linked (GlcNAc...) asparagine glycosylation is present at Asn-283. Residues 283–292 (NMSDEVPRSA) are Extracellular-facing. Residues 293-313 (GCTPLIGVFFTVCMALLVLSL) traverse the membrane as a helical segment. Topologically, residues 314 to 410 (SKSILLIKFL…WLAILYRFDQ (97 aa)) are cytoplasmic. An HA-stretch; determines single-channel conductance in 5-HT3 receptors region spans residues 377–409 (FWFQFRSINNSLRTRDQIHQKEVEWLAILYRFD). A helical membrane pass occupies residues 411–431 (LLFRIYLAVLGLYTVTLCSLW). The Extracellular segment spans residues 432 to 437 (ALWSRM).

Belongs to the ligand-gated ion channel (TC 1.A.9) family. 5-hydroxytryptamine receptor (TC 1.A.9.2) subfamily. HTR3B sub-subfamily. Forms homopentameric as well as heteropentameric serotonin-activated cation-selective channel complexes with HTR3A. The homomeric complex is not functional. Heteropentameric complexes display properties which resemble that of neuronal serotonin-activated channels in vivo. Post-translationally, N-glycosylation is required for membrane localization.

Its subcellular location is the postsynaptic cell membrane. It is found in the cell membrane. The catalysed reaction is Na(+)(in) = Na(+)(out). It catalyses the reaction K(+)(in) = K(+)(out). It carries out the reaction Ca(2+)(in) = Ca(2+)(out). In terms of biological role, forms serotonin (5-hydroxytryptamine/5-HT3)-activated cation-selective channel complexes, which when activated cause fast, depolarizing responses in neurons. The sequence is that of 5-hydroxytryptamine receptor 3B from Mus musculus (Mouse).